A 419-amino-acid polypeptide reads, in one-letter code: Putative L-glutamine:3-amino-2,3-dideoxy-scyllo-inosose aminotransferase (419 aa).

Lysine 199 carries the post-translational modification N6-(pyridoxal phosphate)lysine.

The protein belongs to the DegT/DnrJ/EryC1 family. L-glutamine:2-deoxy-scyllo-inosose/scyllo-inosose aminotransferase subfamily. The cofactor is pyridoxal 5'-phosphate.

The catalysed reaction is 3-amino-2,3-dideoxy-scyllo-inosose + L-glutamine = 2-deoxystreptamine + 2-oxoglutaramate. It functions in the pathway metabolic intermediate biosynthesis; 2-deoxystreptamine biosynthesis; 2-deoxystreptamine from D-glucose 6-phosphate: step 4/4. It participates in antibiotic biosynthesis; kanamycin biosynthesis. Catalyzes the transamination of 3-amino-2,3-dideoxy-scyllo-inosose (amino-DOI) into 2-deoxystreptamine (DOS). The protein is Putative L-glutamine:3-amino-2,3-dideoxy-scyllo-inosose aminotransferase (kanD) of Streptomyces kanamyceticus.